A 667-amino-acid chain; its full sequence is MADLSSRVNELHDLLNQYSYEYYVEDNPSVPDSEYDKLLHELIKIEEEHPEYKTVDSPTVRVGGEAQASFKKVNHDTPMLSLGNAFNEDDLRKFDQRIREQIGNVEYMCELKIDGLAVSLKYVDGYFVQGLTRGDGTTGEDITENLKTIHAIPLKMKEPLNVEVRGEAYMPRRSFLRLNEEKEKNDEQLFANPRNAAAGSLRQLDSKLTAKRKLSVFIYSVNDFTDFNARSQSEALDELDKLGFTTNKNRARVNNIDGVLEYIEKWTSQRESLPYDIDGIVIKVNDLDQQDEMGFTQKSPRWAIAYKFPAEEVVTKLLDIELSIGRTGVVTPTAILEPVKVAGTTVSRASLHNEDLIHDRDIRIGDSVVVKKAGDIIPEVVRSIPERRPEDAVTYHMPTHCPSCGHELVRIEGEVALRCINPKCQAQLVEGLIHFVSRQAMNIDGLGTKIIQQLYQSELIKDVADIFYLTEEDLLPLDRMGQKKVDNLLAAIQQAKDNSLENLLFGLGIRHLGVKASQVLAEKYETIDRLLTVTEAELVEIHDIGDKVAQSVVTYLENEDIRALIQKLKDKHVNMIYKGIKTSDIEGHPEFSGKTIVLTGKLHQMTRNEASKWLASQGAKVTSSVTKNTDVVIAGEDAGSKLTKAQSLGIEIWTEQQFVDKQNELNS.

NAD(+) contacts are provided by residues 32–36 (DSEYD), 81–82 (SL), and Glu110. The active-site N6-AMP-lysine intermediate is the Lys112. NAD(+)-binding residues include Arg133, Glu167, Lys283, and Lys307. Cys401, Cys404, Cys419, and Cys424 together coordinate Zn(2+). A BRCT domain is found at 586-667 (EGHPEFSGKT…FVDKQNELNS (82 aa)).

This sequence belongs to the NAD-dependent DNA ligase family. LigA subfamily. Requires Mg(2+) as cofactor. It depends on Mn(2+) as a cofactor.

The catalysed reaction is NAD(+) + (deoxyribonucleotide)n-3'-hydroxyl + 5'-phospho-(deoxyribonucleotide)m = (deoxyribonucleotide)n+m + AMP + beta-nicotinamide D-nucleotide.. Functionally, DNA ligase that catalyzes the formation of phosphodiester linkages between 5'-phosphoryl and 3'-hydroxyl groups in double-stranded DNA using NAD as a coenzyme and as the energy source for the reaction. It is essential for DNA replication and repair of damaged DNA. In Staphylococcus aureus (strain Mu3 / ATCC 700698), this protein is DNA ligase.